We begin with the raw amino-acid sequence, 376 residues long: MRGKTFRFEMQRDLVSFPLSPAVRVKLVSAGFQTAEELLEVKPSELSKEVGISKAEALETLQIIRRECLTNKPRYAGTSESHKKCTALELLEQEHTQGFIITFCSALDDILGGGVPLMKTTEICGAPGVGKTQLCMQLAVDVQIPECFGGVAGEAVFIDTEGSFMVDRVVDLATACIQHLQLIAEKHKGEEHRKALEDFTLDNILSHIYYFRCRDYTELLAQVYLLPDFLSEHSKVRLVIVDGIAFPFRHDLDDLSLRTRLLNGLAQQMISLANNHRLAVILTNQMTTKIDRNQALLVPALGESWGHAATIRLIFHWDRKQRLATLYKSPSQKECTVLFQIKPQGFRDTVVTSACSLQTEGSLSTRKRSRDPEEEL.

Residues 1–126 are required for Holliday junction resolution activity; the sequence is MRGKTFRFEM…LMKTTEICGA (126 aa). A Phosphoserine modification is found at S20. The interaction with RAD51B, RAD51D and XRCC3 stretch occupies residues 79–136; it reads SESHKKCTALELLEQEHTQGFIITFCSALDDILGGGVPLMKTTEICGAPGVGKTQLCM. 125–132 contacts ATP; it reads GAPGVGKT. A Nuclear localization signal motif is present at residues 366–370; sequence RKRSR.

Belongs to the RecA family. RAD51 subfamily. In terms of assembly, part of the RAD51 paralog protein complexes BCDX2 and CX3; the complexes have a ring-like structure arranged into a flat disc around a central channel. The BCDX2 complex consits of RAD51B, RAD51C, RAD51D and XRCC2; the CX3 complex consists of RAD51C and XRCC3. The BCDX2 subcomplex RAD51B:RAD51C interacts with RAD51. Interacts with SWSAP1; involved in homologous recombination repair. Interacts directly with PALB2 which may serve as a scaffold for a HR complex containing PALB2, BRCA2, RAD51C, RAD51 and XRCC3. Interacts with HELQ. Interacts with DNA damage up-regulated protein DDUP. As to expression, expressed in a variety of tissues, with highest expression in testis, heart muscle, spleen and prostate.

The protein localises to the nucleus. The protein resides in the cytoplasm. It localises to the perinuclear region. It is found in the mitochondrion. In terms of biological role, essential for the homologous recombination (HR) pathway of DNA repair. Involved in the homologous recombination repair (HRR) pathway of double-stranded DNA breaks arising during DNA replication or induced by DNA-damaging agents. Part of the RAD51 paralog protein complexes BCDX2 and CX3 which act at different stages of the BRCA1-BRCA2-dependent HR pathway. Upon DNA damage, BCDX2 seems to act downstream of BRCA2 recruitment and upstream of RAD51 recruitment; CX3 seems to act downstream of RAD51 recruitment; both complexes bind predominantly to the intersection of the four duplex arms of the Holliday junction (HJ) and to junction of replication forks. The BCDX2 complex was originally reported to bind single-stranded DNA, single-stranded gaps in duplex DNA and specifically to nicks in duplex DNA. The BCDX2 subcomplex RAD51B:RAD51C exhibits single-stranded DNA-dependent ATPase activity suggesting an involvement in early stages of the HR pathway. Involved in RAD51 foci formation in response to DNA damage suggesting an involvement in early stages of HR probably in the invasion step. Has an early function in DNA repair in facilitating phosphorylation of the checkpoint kinase CHEK2 and thereby transduction of the damage signal, leading to cell cycle arrest and HR activation. Participates in branch migration and HJ resolution and thus is important for processing HR intermediates late in the DNA repair process; the function may be linked to the CX3 complex. Part of a PALB2-scaffolded HR complex containing BRCA2 and which is thought to play a role in DNA repair by HR. Protects RAD51 from ubiquitin-mediated degradation that is enhanced following DNA damage. Plays a role in regulating mitochondrial DNA copy number under conditions of oxidative stress in the presence of RAD51 and XRCC3. Contributes to DNA cross-link resistance, sister chromatid cohesion and genomic stability. Involved in maintaining centrosome number in mitosis. This chain is DNA repair protein RAD51 homolog 3 (RAD51C), found in Homo sapiens (Human).